A 302-amino-acid chain; its full sequence is Uroporphyrinogen-III synthase, chloroplastic (302 aa).

Positions Met1–Ile39 are disordered. A chloroplast-targeting transit peptide spans Met1–Val50.

The protein belongs to the uroporphyrinogen-III synthase family.

It is found in the plastid. The protein localises to the chloroplast. It catalyses the reaction hydroxymethylbilane = uroporphyrinogen III + H2O. It participates in porphyrin-containing compound metabolism; protoporphyrin-IX biosynthesis; coproporphyrinogen-III from 5-aminolevulinate: step 3/4. In terms of biological role, catalyzes cyclization of the linear tetrapyrrole, hydroxymethylbilane, to the macrocyclic uroporphyrinogen III, a precursor of tetrapyrroles such as chlorophyll, heme and phycobilins. This Oryza sativa subsp. japonica (Rice) protein is Uroporphyrinogen-III synthase, chloroplastic (UROS).